Reading from the N-terminus, the 79-residue chain is Conotoxin Vi6.1 (79 aa).

The first 22 residues, 1-22, serve as a signal peptide directing secretion; the sequence is MKLTCVLIITVLFLTASQLITA. The propeptide occupies 23-47; that stretch reads DYSRDQRQYRAVRLGDEMRNFKGAR. Cystine bridges form between Cys49-Cys62, Cys56-Cys67, and Cys61-Cys77. Residues Pro60 and Pro63 each carry the 4-hydroxyproline modification.

In terms of tissue distribution, expressed by the venom duct.

It is found in the secreted. In terms of biological role, ion channel inhibitor that inhibits the increase in intracellular calcium upon depolarization in DRG neurons. In vivo, both intraperitoneal and intracranial injections into mice induce hyperactivity. This is Conotoxin Vi6.1 from Conus virgo (Virgin cone).